A 225-amino-acid chain; its full sequence is Endoglucanase (225 aa).

Positions 1–15 (MKVFVVLAAIVAIAN) are cleaved as a signal peptide. The active-site Nucleophile is aspartate 29. Disulfide bonds link cysteine 30-cysteine 152, cysteine 31-cysteine 66, cysteine 35-cysteine 103, cysteine 50-cysteine 74, cysteine 104-cysteine 219, cysteine 106-cysteine 209, and cysteine 176-cysteine 187. Asparagine 55 is a glycosylation site (N-linked (GlcNAc...) asparagine). Aspartate 138 (proton donor) is an active-site residue.

It belongs to the glycosyl hydrolase 45 (cellulase K) family. N- and O-glycosylated. Contains hybrid- and complex-type N-glycans.

Its subcellular location is the secreted. The catalysed reaction is Endohydrolysis of (1-&gt;4)-beta-D-glucosidic linkages in cellulose, lichenin and cereal beta-D-glucans.. With respect to regulation, activity is not affected by metal ions except Mn(2+), which reduces the activity by 40-50%. However, no significant change in activity in response to 1 mM EDTA. In terms of biological role, hydrolyzes carboxymethylcellulose (CMC). Also hydrolyzes lichenan and barley beta-1,4-D-glucan. CMC is hydrolyzed majorily to cellobiose (G2), cellotriose (G3) and cellotetraose (G4). Cellohexaose (G6) is hydrolyzed to G4 and G2 with traces of G3. Cellopentaose (G5) is completely hydrolyzed to G2 and G3, and G4 is partially hydrolyzed to G2. Does not hydrolyze G2 or G3. Does not hydrolyze crystalline cellulose, soluble starch, xylan, mannan or laminarin. The protein is Endoglucanase of Cryptopygus antarcticus (Antarctic springtail).